The sequence spans 179 residues: UPF0398 protein Bsph_0756 (179 aa).

This sequence belongs to the UPF0398 family.

The sequence is that of UPF0398 protein Bsph_0756 from Lysinibacillus sphaericus (strain C3-41).